We begin with the raw amino-acid sequence, 31 residues long: Putative gene 37 protein (31 aa).

The polypeptide is Putative gene 37 protein (37) (Bacillus subtilis (Bacteriophage SP01)).